Here is a 249-residue protein sequence, read N- to C-terminus: MADS-box transcription factor 7 (249 aa).

One can recognise an MADS-box domain in the interval 1-61 (MGRGRVELKR…GKLYEFCSTQ (61 aa)). The K-box domain maps to 90-180 (LKASRNEYLK…RRKLEESNHV (91 aa)).

In terms of assembly, may interact with the K-box of MADS6. May interact with MADS13 and MADS18. As to expression, expressed in lodicules, stamens and carpels.

It is found in the nucleus. Its function is as follows. Probable transcription factor. May be involved in the control of flowering time. In Oryza sativa subsp. japonica (Rice), this protein is MADS-box transcription factor 7 (MADS7).